The primary structure comprises 255 residues: tRNA (guanine-N(7)-)-methyltransferase (255 aa).

Basic and acidic residues predominate over residues 1-11; the sequence is MSISDNSRDQL. The disordered stretch occupies residues 1–25; sequence MSISDNSRDQLGELPAGRPLQSDFD. Residues glutamate 83, glutamate 108, aspartate 135, and aspartate 158 each contribute to the S-adenosyl-L-methionine site. The active site involves aspartate 158. Residue lysine 162 participates in substrate binding. The interval 164–169 is interaction with RNA; the sequence is RHNKRR. Substrate contacts are provided by residues aspartate 194 and 232–235; that span reads TKFE.

This sequence belongs to the class I-like SAM-binding methyltransferase superfamily. TrmB family.

It carries out the reaction guanosine(46) in tRNA + S-adenosyl-L-methionine = N(7)-methylguanosine(46) in tRNA + S-adenosyl-L-homocysteine. Its pathway is tRNA modification; N(7)-methylguanine-tRNA biosynthesis. Catalyzes the formation of N(7)-methylguanine at position 46 (m7G46) in tRNA. The chain is tRNA (guanine-N(7)-)-methyltransferase from Corynebacterium glutamicum (strain ATCC 13032 / DSM 20300 / JCM 1318 / BCRC 11384 / CCUG 27702 / LMG 3730 / NBRC 12168 / NCIMB 10025 / NRRL B-2784 / 534).